Here is a 658-residue protein sequence, read N- to C-terminus: Carnitine O-palmitoyltransferase 2, mitochondrial (658 aa).

A mitochondrion-targeting transit peptide spans 1-25; it reads MVPRLLLRAWPRGPAVGPGAPSRPL. Topologically, residues 26–178 are mitochondrial matrix; the sequence is SAGSGPGQYL…GLLEPEVFHL (153 aa). The residue at position 69 (lysine 69) is an N6-succinyllysine. The residue at position 79 (lysine 79) is an N6-acetyllysine. An N6-succinyllysine modification is found at lysine 85. Positions 179-208 form an intramembrane region, note=Mitochondrial inner membrane; the sequence is NPAKSDTITFKRLIRFVPSSLSWYGAYLVN. The Mitochondrial matrix portion of the chain corresponds to 209–658; that stretch reads AYPLDMSQYF…DALEGKSIKS (450 aa). Lysine 239 is modified (N6-acetyllysine; alternate). Lysine 239 carries the post-translational modification N6-succinyllysine; alternate. Lysine 305 is modified (N6-acetyllysine). Catalysis depends on histidine 372, which acts as the Proton acceptor. N6-succinyllysine occurs at positions 424 and 439. 452-464 contacts CoA; sequence GKEFLKKQKLSPD. Residues tyrosine 486, serine 488, and threonine 499 each contribute to the (R)-carnitine site. N6-acetyllysine; alternate occurs at positions 510 and 544. An N6-succinyllysine; alternate mark is found at lysine 510 and lysine 544.

The protein belongs to the carnitine/choline acetyltransferase family.

Its subcellular location is the mitochondrion inner membrane. The catalysed reaction is (R)-carnitine + hexadecanoyl-CoA = O-hexadecanoyl-(R)-carnitine + CoA. The enzyme catalyses octanoyl-CoA + (R)-carnitine = O-octanoyl-(R)-carnitine + CoA. It carries out the reaction decanoyl-CoA + (R)-carnitine = O-decanoyl-(R)-carnitine + CoA. It catalyses the reaction dodecanoyl-CoA + (R)-carnitine = O-dodecanoyl-R-carnitine + CoA. The catalysed reaction is tetradecanoyl-CoA + (R)-carnitine = O-tetradecanoyl-(R)-carnitine + CoA. The enzyme catalyses (R)-carnitine + octadecanoyl-CoA = O-octadecanoyl-(R)-carnitine + CoA. It carries out the reaction eicosanoyl-CoA + (R)-carnitine = O-eicosanoyl-(R)-carnitine + CoA. It catalyses the reaction (9Z)-tetradecenoyl-CoA + (R)-carnitine = O-(9Z)-tetradecenoyl-(R)-carnitine + CoA. The catalysed reaction is (5Z)-tetradecenoyl-CoA + (R)-carnitine = O-(5Z)-tetradecenoyl-(R)-carnitine + CoA. The enzyme catalyses (R)-carnitine + (9Z)-octadecenoyl-CoA = O-(9Z)-octadecenoyl-(R)-carnitine + CoA. It carries out the reaction 4,8-dimethylnonanoyl-CoA + (R)-carnitine = O-4,8-dimethylnonanoyl-(R)-carnitine + CoA. The protein operates within lipid metabolism; fatty acid beta-oxidation. Inhibited by trans-2-hexadecanoyl-CoA. Its function is as follows. Involved in the intramitochondrial synthesis of acylcarnitines from accumulated acyl-CoA metabolites. Reconverts acylcarnitines back into the respective acyl-CoA esters that can then undergo beta-oxidation, an essential step for the mitochondrial uptake of long-chain fatty acids and their subsequent beta-oxidation in the mitochondrion. Active with medium (C8-C12) and long-chain (C14-C18) acyl-CoA esters. This Homo sapiens (Human) protein is Carnitine O-palmitoyltransferase 2, mitochondrial.